The primary structure comprises 132 residues: Small ribosomal subunit protein uS11 (132 aa).

The protein belongs to the universal ribosomal protein uS11 family. Part of the 30S ribosomal subunit.

Functionally, located on the platform of the 30S subunit. The sequence is that of Small ribosomal subunit protein uS11 from Saccharolobus solfataricus (strain ATCC 35092 / DSM 1617 / JCM 11322 / P2) (Sulfolobus solfataricus).